The sequence spans 315 residues: Methionyl-tRNA formyltransferase (315 aa).

107 to 110 (SLLP) contacts (6S)-5,6,7,8-tetrahydrofolate.

It belongs to the Fmt family.

It carries out the reaction L-methionyl-tRNA(fMet) + (6R)-10-formyltetrahydrofolate = N-formyl-L-methionyl-tRNA(fMet) + (6S)-5,6,7,8-tetrahydrofolate + H(+). Functionally, attaches a formyl group to the free amino group of methionyl-tRNA(fMet). The formyl group appears to play a dual role in the initiator identity of N-formylmethionyl-tRNA by promoting its recognition by IF2 and preventing the misappropriation of this tRNA by the elongation apparatus. This is Methionyl-tRNA formyltransferase from Borrelia garinii subsp. bavariensis (strain ATCC BAA-2496 / DSM 23469 / PBi) (Borreliella bavariensis).